Reading from the N-terminus, the 234-residue chain is Small ribosomal subunit protein uS3 (234 aa).

The region spanning 39–107 is the KH type-2 domain; it reads IRKFLKKELY…EVSINIKEVK (69 aa).

Belongs to the universal ribosomal protein uS3 family. As to quaternary structure, part of the 30S ribosomal subunit. Forms a tight complex with proteins S10 and S14.

Functionally, binds the lower part of the 30S subunit head. Binds mRNA in the 70S ribosome, positioning it for translation. This is Small ribosomal subunit protein uS3 from Helicobacter pylori (strain G27).